The chain runs to 1385 residues: Pesticidal crystal protein Cry5Aa (1385 aa).

Disordered stretches follow at residues 768–799 and 1359–1385; these read NITV…GQYN and PLPT…NNNQ. Residues 782-796 show a composition bias toward gly residues; that stretch reads NGGGDGGGNGGGDGG. Low complexity predominate over residues 1370–1385; the sequence is NTASSTNSDTSMNNNQ.

This sequence belongs to the delta endotoxin family.

Endotoxin with nematicidal activity. This chain is Pesticidal crystal protein Cry5Aa (cry5Aa), found in Bacillus thuringiensis subsp. darmstadiensis.